We begin with the raw amino-acid sequence, 286 residues long: Mating type protein A-1 (286 aa).

Positions 40–95 (AAKKKVNGFMSFRSYYSPLFSQLPQKERSPFMTILWQHDPFHNEWNFMCSVYSSIR) form a DNA-binding region, alpha box.

It belongs to the MATALPHA1 family.

It localises to the nucleus. Required for expression of the heterokaryon incompatibility and sexual functions. The protein is Mating type protein A-1 (MTA-1) of Neurospora africana.